The following is a 48-amino-acid chain: Large ribosomal subunit protein bL32 (48 aa).

Over residues 1 to 20 the composition is skewed to basic residues; that stretch reads MAVPKRRVSKTRAAKRRTHY. The segment at 1–48 is disordered; it reads MAVPKRRVSKTRAAKRRTHYKVSLPMPVKDKDGSYKMPHRANPTTKEY.

Belongs to the bacterial ribosomal protein bL32 family.

The chain is Large ribosomal subunit protein bL32 from Campylobacter jejuni subsp. doylei (strain ATCC BAA-1458 / RM4099 / 269.97).